The sequence spans 195 residues: Thymidine kinase (195 aa).

Residues 15–22, E23, 57–58, and 88–91 contribute to the ATP site; these read GPMYSGKS, SH, and DEVQ. The active-site Proton acceptor is E89. Position 120 (F120) interacts with substrate. Residues C145 and C148 each contribute to the Zn(2+) site. Y179 contacts substrate. 2 residues coordinate Zn(2+): C183 and C186.

It belongs to the thymidine kinase family.

It is found in the cytoplasm. The enzyme catalyses thymidine + ATP = dTMP + ADP + H(+). This chain is Thymidine kinase, found in Clostridium acetobutylicum (strain ATCC 824 / DSM 792 / JCM 1419 / IAM 19013 / LMG 5710 / NBRC 13948 / NRRL B-527 / VKM B-1787 / 2291 / W).